Reading from the N-terminus, the 209-residue chain is Uracil phosphoribosyltransferase (209 aa).

5-phospho-alpha-D-ribose 1-diphosphate is bound by residues arginine 79, arginine 104, and aspartate 131–serine 139. Residues valine 194 and glycine 199–alanine 201 contribute to the uracil site. Position 200 (aspartate 200) interacts with 5-phospho-alpha-D-ribose 1-diphosphate.

Belongs to the UPRTase family. The cofactor is Mg(2+).

The catalysed reaction is UMP + diphosphate = 5-phospho-alpha-D-ribose 1-diphosphate + uracil. Its pathway is pyrimidine metabolism; UMP biosynthesis via salvage pathway; UMP from uracil: step 1/1. With respect to regulation, allosterically activated by GTP. Functionally, catalyzes the conversion of uracil and 5-phospho-alpha-D-ribose 1-diphosphate (PRPP) to UMP and diphosphate. This Clostridium botulinum (strain ATCC 19397 / Type A) protein is Uracil phosphoribosyltransferase.